We begin with the raw amino-acid sequence, 78 residues long: RNA-binding protein Hfq (78 aa).

Residues 10-69 (DPFLNTLRKEHVPVSIYLVNGIKLQGQIESFDQYVVLLRNTVTQMVYKHAISTVVPARAV) enclose the Sm domain.

The protein belongs to the Hfq family. Homohexamer.

Its function is as follows. RNA chaperone that binds small regulatory RNA (sRNAs) and mRNAs to facilitate mRNA translational regulation in response to envelope stress, environmental stress and changes in metabolite concentrations. Also binds with high specificity to tRNAs. The sequence is that of RNA-binding protein Hfq from Bordetella petrii (strain ATCC BAA-461 / DSM 12804 / CCUG 43448).